A 1365-amino-acid polypeptide reads, in one-letter code: Transcription elongation factor spt6 (1365 aa).

Residues 1 to 14 (MSENEVVGSPTTNG) show a composition bias toward polar residues. Disordered regions lie at residues 1 to 165 (MSEN…QGHR) and 181 to 202 (FEDE…SVRP). Low complexity predominate over residues 24–33 (ENGEGTNVDD). Acidic residues-rich tracts occupy residues 47–64 (NDND…DEEA), 73–82 (IVEDEEDEVP), 102–111 (DMLDEEDLEL), and 136–156 (ETLE…VDDE). The residue at position 137 (Thr-137) is a Phosphothreonine. Ser-143 carries the post-translational modification Phosphoserine. Phosphoserine is present on Ser-454. The S1 motif domain maps to 1050 to 1118 (DAIVPVNVRR…ANFMVDLSLR (69 aa)). The span at 1124–1139 (SANSKRQTSSHRTSYW) shows a compositional bias: polar residues. The segment at 1124-1146 (SANSKRQTSSHRTSYWDTEAEKR) is disordered. Positions 1167–1262 (HPLFKDLNAS…IVLHIKAIAK (96 aa)) constitute an SH2 domain.

Belongs to the SPT6 family.

It localises to the nucleus. The protein resides in the chromosome. Functionally, histone H3-H4 chaperone that plays a role in maintenance of chromatin structure during RNA polymerase II transcription elongation thereby repressing transcription initiation from cryptic promoters. Mediates the reassembly of nucleosomes onto the promoters of at least a selected set of genes during repression; the nucleosome reassembly is essential for transcriptional repression. In Schizosaccharomyces pombe (strain 972 / ATCC 24843) (Fission yeast), this protein is Transcription elongation factor spt6 (spt6).